The chain runs to 339 residues: UDP-N-acetylglucosamine/UDP-N-acetylgalactosamine transporter nstp-4 (339 aa).

8 helical membrane passes run 44–64 (LSST…FFVI), 94–114 (LKVA…FFAL), 148–168 (YNWM…YPSG), 186–206 (ILGL…GVYF), 224–244 (LAFF…WQAI), 255–275 (GVIW…ALVV), 281–301 (ILKG…SWLV), and 305–325 (LTIT…TFLY).

The protein belongs to the nucleotide-sugar transporter family. SLC35A subfamily. In terms of tissue distribution, widely expressed, including in pharynx and pharyngeal gland cells, seam cells, spermatheca, stomatointestinal muscle, vulva, and body wall muscle.

It is found in the golgi apparatus membrane. Uridine diphosphate-N-acetylglucosamine (UDP-GlcNAc) transporter in the Golgi apparatus. UDP-N-acetylgalactosamine (UDP-GalNAc) transporter in the Golgi apparatus. Apparently transports UDP-GlcNAc and UDP-GalNAc simultaneously, and independently, by an unknown mechanism. Functions redundantly with nucleotide sugar transporter srf-3. May be involved in gonadal development. The sequence is that of UDP-N-acetylglucosamine/UDP-N-acetylgalactosamine transporter nstp-4 from Caenorhabditis elegans.